The primary structure comprises 555 residues: GPI-anchor transamidase component PIGS (555 aa).

The Cytoplasmic segment spans residues 2-18; that stretch reads AATGAAATDLEVVRGKR. A cardiolipin is bound by residues Arg15 and Arg18. The chain crosses the membrane as a helical span at residues 19 to 39; it reads AALFFATVVIVLGLPLWWKTT. The Lumenal segment spans residues 40 to 517; it reads ETYRAPLPYS…LHLLYFPDDQ (478 aa). N-linked (GlcNAc...) asparagine glycosylation is found at Asn267 and Asn370. The chain crosses the membrane as a helical span at residues 518–532; the sequence is KFAIYIPLFLPMAVP. At 533-555 the chain is on the cytoplasmic side; sequence ILLSLFKIFLETRKSWKKPEKTD.

It belongs to the PIGS family. Heteropentamer. Part of the GPI-anchor transamidase complex, consisting of PIGK, PIGT, PIGS, PIGU and GAA1.

The protein resides in the endoplasmic reticulum membrane. It participates in glycolipid biosynthesis; glycosylphosphatidylinositol-anchor biosynthesis. In terms of biological role, component of the glycosylphosphatidylinositol-anchor (GPI-anchor) transamidase (GPI-T) complex that catalyzes the formation of the linkage between a proprotein and a GPI-anchor and participates in GPI anchored protein biosynthesis. The protein is GPI-anchor transamidase component PIGS of Bos taurus (Bovine).